A 237-amino-acid polypeptide reads, in one-letter code: MPRVRRPAAPTGAATLLALMWLASPALPVGGFSYSEGLEPAVEAGLVSDEATAQAWLLDQLLLGLGRGELAVVAQAVAAWRRGDATRVRELNDWLLSTRESAELRLQTEQMGRSLGAWLQQRPGTDAAALARLLALPPAPSYPVAFALAAAGTPASLREVALAYAFGWAENMVQAAIKAVPLGQSAGQRMLGALVEAIPATVDAALVLRDGERMAFTPMLAVLSARHETQYSRLFRS.

It belongs to the UreF family. In terms of assembly, ureD, UreF and UreG form a complex that acts as a GTP-hydrolysis-dependent molecular chaperone, activating the urease apoprotein by helping to assemble the nickel containing metallocenter of UreC. The UreE protein probably delivers the nickel.

It is found in the cytoplasm. Required for maturation of urease via the functional incorporation of the urease nickel metallocenter. The protein is Urease accessory protein UreF of Methylibium petroleiphilum (strain ATCC BAA-1232 / LMG 22953 / PM1).